We begin with the raw amino-acid sequence, 481 residues long: Molybdate-anion transporter (481 aa).

12 helical membrane passes run 1–21 (MFVT…ALEI), 47–67 (LFLK…PYLY), 80–100 (IAIL…VAGW), 131–151 (FMLI…TTTF), 180–200 (WNYG…EWLG), 201–221 (LGPV…AWFV), 276–296 (VMLL…FVFL), 306–326 (PPLG…STLF), 341–361 (LLCL…FSTV), 371–391 (LLAF…VSFL), 403–423 (AVLA…LLAL), and 443–463 (FAGC…LFTV).

The protein belongs to the major facilitator superfamily.

The protein resides in the cell membrane. In terms of biological role, mediates high-affinity intracellular uptake of the rare oligo-element molybdenum. This Danio rerio (Zebrafish) protein is Molybdate-anion transporter (mfsd5).